The sequence spans 416 residues: Adenosylhomocysteinase (416 aa).

Substrate-binding residues include Thr-55, Asp-126, and Glu-151. 152 to 154 (TTT) contributes to the NAD(+) binding site. The substrate site is built by Lys-181 and Asp-185. Residues Asn-186, 215-220 (GYGWVG), Glu-238, Asn-273, 294-296 (AGH), and Asn-341 contribute to the NAD(+) site.

It belongs to the adenosylhomocysteinase family. It depends on NAD(+) as a cofactor.

The protein resides in the cytoplasm. The enzyme catalyses S-adenosyl-L-homocysteine + H2O = L-homocysteine + adenosine. It participates in amino-acid biosynthesis; L-homocysteine biosynthesis; L-homocysteine from S-adenosyl-L-homocysteine: step 1/1. May play a key role in the regulation of the intracellular concentration of adenosylhomocysteine. In Aeropyrum pernix (strain ATCC 700893 / DSM 11879 / JCM 9820 / NBRC 100138 / K1), this protein is Adenosylhomocysteinase.